The chain runs to 279 residues: Replication protein A 32 kDa subunit A (279 aa).

The interval 1–39 is disordered; the sequence is MMSFSQPDAFSPSQFTSSQNAAADSTTPSKSRGASSTMP. Positions 71–145 form a DNA-binding region, OB; that stretch reads VRLVGLVSGK…RATAFAIRPV (75 aa). The disordered stretch occupies residues 181–210; that stretch reads GSSSSNGFSEMTTPTSVKSNPAPVLSVTNG. The span at 190–199 shows a compositional bias: polar residues; the sequence is EMTTPTSVKS.

Belongs to the replication factor A protein 2 family. Heterotrimer of RPA1, RPA2 and RPA3 (canonical replication protein A complex). Interacts with RPA1A, RPA1B and RPA3. Post-translationally, phosphorylated in a cell-cycle-dependent manner (from the S phase until mitosis). In response to DNA damage, recruited to DNA-repair nuclear foci, as a hypophosphorylated form. Expressed in root tips, roots, shoot apical meristem (SAM), young leaves, flag leaves and ears, and at lower levels in mature leaves.

Its subcellular location is the nucleus. Its function is as follows. Component of the replication protein A complex (RPA) required for DNA recombination, repair and replication. The activity of RPA is mediated by single-stranded DNA binding and protein interactions. In Oryza sativa subsp. japonica (Rice), this protein is Replication protein A 32 kDa subunit A (RPA2A).